Reading from the N-terminus, the 244-residue chain is Tetraspanin-1 (244 aa).

Transmembrane regions (helical) follow at residues 11–31 (VLFFLDLAMLLAALALIAVGF), 67–87 (LIVVFWSIIGLSLGAVVTAVL), 104–124 (YLVLIIVLVSLEIGCGVAVLV), and 198–218 (ILLVILILQTIAIILPVPILI).

This sequence belongs to the tetraspanin (TM4SF) family.

It localises to the membrane. This chain is Tetraspanin-1 (tsp-1), found in Caenorhabditis elegans.